The following is a 323-amino-acid chain: Ankyrin repeat and SOCS box protein 11 (323 aa).

ANK repeat units follow at residues 64–93 (ADRS…NVNL), 97–126 (NRVS…HVNG), 130–159 (HGAT…KAQL), 162–191 (HLAS…NIDH), 195–224 (QLGT…SVDH), and 227–256 (WLDT…NLKR). In terms of domain architecture, SOCS box spans 273 to 323 (SVEQALLLREGPPALSQLCRLCVRKCLGRACHQAIHKLHLPEPLERFLLYQ).

The protein belongs to the ankyrin SOCS box (ASB) family. As to quaternary structure, substrate-recognition component of the ECS(ASB11) complex, composed of ASB11, CUL5, ELOB, ELOC and RNF7/RBX2.

The protein resides in the endoplasmic reticulum. It functions in the pathway protein modification; protein ubiquitination. Substrate-recognition component of a cullin-5-RING E3 ubiquitin-protein ligase complex (ECS complex, also named CRL5 complex), which mediates the ubiquitination and subsequent proteasomal degradation of target proteins, such as BIK, DIRAS2 and RPN1. The ECS(ASB11) complex acts as a regulator of the endoplasmic reticulum unfolded protein response by mediating ubiquitination and degradation of BIK. This is Ankyrin repeat and SOCS box protein 11 from Homo sapiens (Human).